A 358-amino-acid polypeptide reads, in one-letter code: Chondroadherin (358 aa).

The N-terminal stretch at 1–20 is a signal peptide; it reads MARVLLLSLVFLAILLPALA. Residues 21-50 form the LRRNT domain; it reads ACPQNCHCHGDLQHVICDKVGLQKIPKVSE. A disulfide bridge links Cys22 with Cys37. LRR repeat units follow at residues 51–72, 75–96, 99–120, 123–144, 147–168, 171–192, 195–216, 219–240, 244–265, and 268–289; these read TTKLLNLQRNNFPVLAANSFRT, NLVSLHLQHCNIREVAAGAFRG, QLIYLYLSHNDIRVLRAGAFDD, ELTYLYLDHNKVSELPRGLLSP, NLFILQLNNNKIRELRAGAFQG, DLRWLYLSENALTSLHPGSLDD, NLAKFHLDRNQLSSYPSAALSK, VVEELKLSHNPLKSIPDNAFQS, YLETLWLDNTNLEKFSDAAFAG, and TLKHVHLENNRLNQLPSTFPFD. An O-linked (GalNAc...) serine glycan is attached at Ser143. Residues 299–347 form the LRRCT domain; it reads NPWKCTCQLRGLRRWLEAKTSRPDATCSSPAKFKGQRIRDTDALRSCKS. Disulfide bonds link Cys303/Cys345 and Cys305/Cys325. The interval 321-358 is disordered; sequence PDATCSSPAKFKGQRIRDTDALRSCKSPTKRSKKAGRH. The span at 348 to 358 shows a compositional bias: basic residues; that stretch reads PTKRSKKAGRH.

This sequence belongs to the small leucine-rich proteoglycan (SLRP) family. SLRP class IV subfamily. In terms of assembly, mostly monomeric. Present in femoral head and rib cartilage, as well as in tendon. Detected in bone marrow.

The protein resides in the secreted. It is found in the extracellular space. It localises to the extracellular matrix. In terms of biological role, promotes attachment of chondrocytes, fibroblasts, and osteoblasts. This binding is mediated (at least for chondrocytes and fibroblasts) by the integrin alpha(2)beta(1). May play an important role in the regulation of chondrocyte growth and proliferation. The sequence is that of Chondroadherin (Chad) from Rattus norvegicus (Rat).